Reading from the N-terminus, the 194-residue chain is Elongation factor P (194 aa).

Belongs to the elongation factor P family.

The protein localises to the cytoplasm. Its pathway is protein biosynthesis; polypeptide chain elongation. Involved in peptide bond synthesis. Stimulates efficient translation and peptide-bond synthesis on native or reconstituted 70S ribosomes in vitro. Probably functions indirectly by altering the affinity of the ribosome for aminoacyl-tRNA, thus increasing their reactivity as acceptors for peptidyl transferase. In Hydrogenobaculum sp. (strain Y04AAS1), this protein is Elongation factor P.